A 947-amino-acid polypeptide reads, in one-letter code: Serine-aspartate repeat-containing protein C (947 aa).

The signal sequence occupies residues 1–50 (MNNKKTATNRKGMIPNRLNKFSIRKYSVGTASILVGTTLIFGLSGHEAKA). The short motif at 21–32 (FSIRKYSVGTAS) is the YSIRK-G/S signaling motif element. The tract at residues 51–164 (AEHTNGELNQ…STTPKTTTIK (114 aa)) is disordered. The segment at 51–495 (AEHTNGELNQ…GSSTANGDQK (445 aa)) is ligand binding A region. Residues 56 to 71 (GELNQSKNETTAPSEN) show a composition bias toward polar residues. A compositionally biased stretch (basic and acidic residues) spans 72 to 83 (KTTKKVDSRQLK). The span at 84 to 155 (DNTQTATADQ…SNLTQAKDVS (72 aa)) shows a compositional bias: polar residues. CNA-B domains follow at residues 496–606 (KYNL…YKTP) and 607–717 (KYSL…EEET). Residues 678-927 (TQTGTNTTED…NNSNNGTLFG (250 aa)) form a disordered region. Composition is skewed to acidic residues over residues 685 to 695 (TEDDKDADGGE) and 712 to 886 (YYEE…DSDS). The LPXTG sorting signal signature appears at 910–914 (LPETG). Low complexity predominate over residues 912–927 (ETGSENNNSNNGTLFG). Thr-913 is subject to Pentaglycyl murein peptidoglycan amidated threonine. A propeptide spans 914–947 (GSENNNSNNGTLFGGLFAALGSLLLFGRRKKQNK) (removed by sortase).

The protein belongs to the serine-aspartate repeat-containing protein (SDr) family. As to quaternary structure, homodimerizes; via N2-Domain. Interacts with host NRXN1; this interaction mediates bacterial attachment to host cells.

It is found in the secreted. Its subcellular location is the cell wall. In terms of biological role, cell surface-associated calcium-binding protein which plays an important role in adhesion and pathogenesis. Mediates interactions with components of the extracellular matrix such as host NRXN1 to promote bacterial adhesion. This is Serine-aspartate repeat-containing protein C (sdrC) from Staphylococcus aureus (strain Newman).